An 891-amino-acid polypeptide reads, in one-letter code: Valine--tRNA ligase (891 aa).

The 'HIGH' region motif lies at 43 to 53; it reads PFTSGTLHLGH. The 'KMSKS' region motif lies at 536-540; the sequence is KMSKS. Lys539 lines the ATP pocket.

The protein belongs to the class-I aminoacyl-tRNA synthetase family. ValS type 2 subfamily.

The protein localises to the cytoplasm. It catalyses the reaction tRNA(Val) + L-valine + ATP = L-valyl-tRNA(Val) + AMP + diphosphate. Functionally, catalyzes the attachment of valine to tRNA(Val). As ValRS can inadvertently accommodate and process structurally similar amino acids such as threonine, to avoid such errors, it has a 'posttransfer' editing activity that hydrolyzes mischarged Thr-tRNA(Val) in a tRNA-dependent manner. This Pyrococcus abyssi (strain GE5 / Orsay) protein is Valine--tRNA ligase.